We begin with the raw amino-acid sequence, 130 residues long: Small ribosomal subunit protein uS9 (130 aa).

This sequence belongs to the universal ribosomal protein uS9 family.

This chain is Small ribosomal subunit protein uS9, found in Xanthomonas campestris pv. campestris (strain 8004).